Consider the following 141-residue polypeptide: Cystatin-SA (141 aa).

The signal sequence occupies residues 1–20 (MAWPLCTLLLLLATQAVALA). The short motif at 76 to 80 (QIVGG) is the Secondary area of contact element. 2 disulfides stabilise this stretch: Cys-94–Cys-104 and Cys-118–Cys-138.

In terms of tissue distribution, expressed in submandibular and sublingual saliva but not in parotid saliva (at protein level). Expressed in submandibular gland and parotid gland.

The protein localises to the secreted. In terms of biological role, thiol protease inhibitor. In Homo sapiens (Human), this protein is Cystatin-SA (CST2).